Here is a 406-residue protein sequence, read N- to C-terminus: Methyltransferase cfoD (406 aa).

2 residues coordinate S-adenosyl-L-methionine: Asp-270 and Arg-312. The active-site Proton acceptor is the His-315.

It belongs to the class I-like SAM-binding methyltransferase superfamily. Cation-independent O-methyltransferase family.

It participates in secondary metabolite biosynthesis; flavonoid biosynthesis. Methyltransferase; part of the gene cluster that mediates the biosynthesis of chlorflavonin, a fungal flavonoid with acetolactate synthase inhibitory activity. Within the pathway, cfoD is responsible for the methylation at position C3-OH of flavonoid. The pathway begins with the PKS-NRPS hybrid synthetase cfoA that uses benzoic acid or p-hydroxybenzoic acid as a starter unit with four rounds of chain elongation using malonyl-CoA to form the chalcone skeleton. Then, a new type of chalcone isomerase, cfoK, catalyzes the conversion of the chalcone into a flavanone by a histidine-mediated oxa-Michael addition mechanism. The desaturation of flavanone to flavone is catalyzed by a new type of flavone synthase, the flavin mononucleotide (FMN)-dependent oxidoreductase cfoJ. Monooxygenases cfoF, cfoG, and P450 cfoH are responsible for the hydroxylation of the flavonoid skeleton at sites C3, C8, and C2', respectively. Like cfoF, the dehydratase cfoI also plays a role in the hydroxylation of position C3. Methyltransferases cfoB, cfoC, and cfoD then catalyze the methylation of C7-OH, C8-OH, and C3-OH, respectively. Finally, the monooxygenase cfoE is responsible for the chlorination of flavonoid at position C3'. The sequence is that of Methyltransferase cfoD from Aspergillus candidus.